Here is a 407-residue protein sequence, read N- to C-terminus: tRNA(Ile)-lysidine synthase (407 aa).

36 to 41 (SGGRDS) contacts ATP.

The protein belongs to the tRNA(Ile)-lysidine synthase family.

The protein resides in the cytoplasm. The enzyme catalyses cytidine(34) in tRNA(Ile2) + L-lysine + ATP = lysidine(34) in tRNA(Ile2) + AMP + diphosphate + H(+). Ligates lysine onto the cytidine present at position 34 of the AUA codon-specific tRNA(Ile) that contains the anticodon CAU, in an ATP-dependent manner. Cytidine is converted to lysidine, thus changing the amino acid specificity of the tRNA from methionine to isoleucine. This Tropheryma whipplei (strain TW08/27) (Whipple's bacillus) protein is tRNA(Ile)-lysidine synthase.